The chain runs to 226 residues: Cysteine and histidine-rich domain-containing protein RAR1 (226 aa).

Zn(2+) contacts are provided by Cys12, Cys17, Cys31, His34, Cys49, Cys50, Cys66, and His71. The CHORD 1 domain occupies 12-71 (CQRIGCNAMFTDDDNPQGSCQFHASGPFFHDGMKEWSCCKQRSHDFSLFLEIPGCKTGKH). The CCCH signature appears at 104–124 (CSRCRQGFFCSDHGSQPKEQI). Residues Cys159, Cys164, Cys178, His181, Cys196, Cys197, Cys213, and His218 each contribute to the Zn(2+) site. Residues 159 to 218 (CKNKGCGQTFKERDNHETACSHHPGPAVFHDRLRGWKCCDVHVKEFDEFMEIPPCTKGWH) form the CHORD 2 domain.

Interacts with HSP90-1, HSP90-2, SGT1A and SGT1B. Forms a ternary complex with SGT1A and barley HSP90.

Required specifically for plant innate immunity. Is essential for resistance conferred by multiple R genes recognizing different bacterial and oomycete pathogen isolates like avirulent P.syringae or H.parasitica (downy mildew). Contributes additively with SGT1B to RPP5-dependent resistance. Functions as a positive regulator of RPS5 accumulation by assisting its stabilization. May function as co-chaperone of HSP90-2 to positively regulate the steady-state accumulation of RPM1 and protect it from SGT1-mediated degradation. Acts as a negative regulator of pathogen-associated molecular pattern (PAMP)-triggered immunity. The chain is Cysteine and histidine-rich domain-containing protein RAR1 (RAR1) from Arabidopsis thaliana (Mouse-ear cress).